A 722-amino-acid polypeptide reads, in one-letter code: MEQQKEITKGGFTLPGEAGFEKLTLELANRWGADVIRDSDGTELSDDILNAGYGIYSTICLIRDHNAWAKANIDKLQQTFLVTSPVVANSETLTIDLMEGFFKEQFLVNDSEEALEYWQVYDRTTETLLQKESWSYHPQNQTVVLTGICPWHKYTVSFMAYRIWEEISMYNHTTNNWNKEHLMQIDPIHKETQEYLLTWMDDWCKKHEQTTVVRFTSMFYNFVWMWGSNEKNRYLFSDWASYDFTVSPHALKLFEEEYGYVLTAEDFIHQGKFHVTHMPADKHKLDWMEFINNFVVDFGKKLIDIVHNYGKLAYVFYDDSWVGVEPYHKNFEKFGFDGLIKCVFSGFEVRLCAGVKVNTHELRLHPYLFPVGLGGAPTFMEGGNPTLDAKNYWISVRRALLREPIDRIGLGGYLHLVEDFPDFTDYIEKIANEFRRIKELHNAGKPMALKPRIAVLHSWGSLRSWTLSGHFHETYMHDLIHINESLSGLPFDVKFINFEDINQGALEEVDVVINAGIMGSAWTGGQAWEDQEIIERLTRFVYEGKAFIGVNEPSALTGYDTLYRMAHVLGVDMDLGDRVSHGRYSFTEEPVEELEFAECGPKAKRNIYLTDGLAKVLKEENGIPVMTSYEFGRGRGIYLASYEHSIKNARTLLNIILYAAGESFHQEGITNNVYTECAYYEKDKILVMINNSNTLQESSVTIKGRTYTKDIPAFDTVILPLE.

Asp319 functions as the Proton donor in the catalytic mechanism.

The protein belongs to the glycoside hydrolase 112 family.

It carries out the reaction beta-D-galactosyl-(1-&gt;4)-L-rhamnose + phosphate = alpha-D-galactose 1-phosphate + L-rhamnopyranose. Reversibly phosphorolyzes beta-D-galactosyl-(1-&gt;4)-L-rhamnose to form alpha-D-galactose 1-phosphate and L-rhamnose. Does not phosphorolyze galacto-N-biose or lacto-N-biose. In the reverse reaction, has the highest activity toward L-rhamnose, also has activity toward L-mannose, and low activity toward L-lyxose, D-glucose, 2-deoxy-D-glucose and D-galactose. This is D-galactosyl-beta-1-&gt;4-L-rhamnose phosphorylase from Lachnoclostridium phytofermentans (strain ATCC 700394 / DSM 18823 / ISDg) (Clostridium phytofermentans).